The sequence spans 386 residues: Tetratricopeptide repeat protein 4 (386 aa).

The residue at position 1 (Met1) is an N-acetylmethionine. Position 51 is a phosphoserine (Ser51). 3 TPR repeats span residues 79 to 112, 117 to 150, and 151 to 184; these read AKTYKDEGNDYFKEKDYKKAVLSYSEGLKKKCAD, AVLYTNRAAAQYYLGNVRSSLNDVLAAKKLKPGH, and LKAIIRGALCHLELKHFAEAVNWCDEGLQIDAKE. A Phosphoserine modification is found at Ser244.

The protein belongs to the TTC4 family. As to quaternary structure, interacts (via TPR repeats) with HSP90AB1. Interacts with HSPA8, CDC6 and TBK1. Interacts with isoform 1 and isoform 3 of MSL1. As to expression, expressed at high levels in the heart, testis, kidney, brain and tongue. Expressed at low levels in the stomach, lung and liver.

The protein localises to the nucleus. It is found in the nucleoplasm. Its subcellular location is the cytoplasm. In terms of biological role, may act as a co-chaperone for HSP90AB1. The polypeptide is Tetratricopeptide repeat protein 4 (Ttc4) (Mus musculus (Mouse)).